A 175-amino-acid polypeptide reads, in one-letter code: Large ribosomal subunit protein uL10 (175 aa).

The protein belongs to the universal ribosomal protein uL10 family. In terms of assembly, part of the ribosomal stalk of the 50S ribosomal subunit. The N-terminus interacts with L11 and the large rRNA to form the base of the stalk. The C-terminus forms an elongated spine to which L12 dimers bind in a sequential fashion forming a multimeric L10(L12)X complex.

In terms of biological role, forms part of the ribosomal stalk, playing a central role in the interaction of the ribosome with GTP-bound translation factors. The protein is Large ribosomal subunit protein uL10 of Mycobacterium sp. (strain JLS).